We begin with the raw amino-acid sequence, 649 residues long: Beta-galactosidase-1-like protein 3 (649 aa).

Glu-203 acts as the Proton donor in catalysis. Catalysis depends on Glu-277, which acts as the Nucleophile.

It belongs to the glycosyl hydrolase 35 family.

In Mus musculus (Mouse), this protein is Beta-galactosidase-1-like protein 3 (Glb1l3).